Consider the following 205-residue polypeptide: Small ribosomal subunit protein uS3c (205 aa).

Residues 37–106 (IRQLLRDYVL…TWRISLVEVS (70 aa)) enclose the KH type-2 domain.

It belongs to the universal ribosomal protein uS3 family. In terms of assembly, part of the 30S ribosomal subunit.

The protein resides in the plastid. It localises to the chloroplast. The sequence is that of Small ribosomal subunit protein uS3c (rps3) from Cyanidioschyzon merolae (strain NIES-3377 / 10D) (Unicellular red alga).